Reading from the N-terminus, the 374-residue chain is WW domain-binding protein 4 (374 aa).

The Matrin-type zinc finger occupies 11 to 42 (KFCDYCKCWIADNRPSVEFHERGKNHKENVAR). Polar residues predominate over residues 91–109 (EPTISPVTNTVQPTPTANQ). Disordered stretches follow at residues 91 to 126 (EPTISPVTNTVQPTPTANQQKEKKKKKKKKEASKGR) and 188 to 328 (SKWE…EAGA). The span at 112 to 121 (EKKKKKKKKE) shows a compositional bias: basic residues. WW domains follow at residues 121 to 154 (EASKGRWVEGVTADGHCYYYDLVTGASQWEKPEG) and 162 to 195 (TAAKAIWVEGLSEDGYTYYYNTETGESKWEKPDD). Composition is skewed to basic and acidic residues over residues 188–197 (SKWEKPDDFI) and 205–270 (SSKD…EKTT). 3 positions are modified to phosphoserine: serine 219, serine 226, and serine 228. The span at 315-325 (STENECLSSSE) shows a compositional bias: polar residues. An interaction with SNRNP200 region spans residues 355 to 373 (KKRRIENGKSRNLRQRGED).

Component of the spliceosome B complex. Associated with U2 snRNPs. Binds splicing factors SNRPB, SNRPC and SF1. Interacts via the WW domains with the Pro-rich domains of KHDRBS1/SAM68. Interacts via the WW domains with the Pro-rich domains of WBP11. Interacts with SNRNP200.

The protein localises to the nucleus. The protein resides in the nucleus speckle. Functionally, involved in pre-mRNA splicing as a component of the spliceosome. May play a role in cross-intron bridging of U1 and U2 snRNPs in the mammalian A complex. This is WW domain-binding protein 4 (Wbp4) from Rattus norvegicus (Rat).